The sequence spans 61 residues: MLILTRKVGESLLIGDDISITILNVRGNQVKIGVNAPKDVSVHREEIYQRIKQAEEKESTS.

It belongs to the CsrA/RsmA family. Homodimer; the beta-strands of each monomer intercalate to form a hydrophobic core, while the alpha-helices form wings that extend away from the core.

It is found in the cytoplasm. Its function is as follows. A key translational regulator that binds mRNA to regulate translation initiation and/or mRNA stability. Mediates global changes in gene expression, shifting from rapid growth to stress survival by linking envelope stress, the stringent response and the catabolite repression systems. Usually binds in the 5'-UTR; binding at or near the Shine-Dalgarno sequence prevents ribosome-binding, repressing translation, binding elsewhere in the 5'-UTR can activate translation and/or stabilize the mRNA. Its function is antagonized by small RNA(s). This chain is Translational regulator CsrA, found in Mannheimia succiniciproducens (strain KCTC 0769BP / MBEL55E).